Reading from the N-terminus, the 98-residue chain is Gas vesicle protein J2 (98 aa).

The interval 75–98 (AGVDADDSKSVLERPDPPTTEGSE) is disordered. Residues 80 to 90 (DDSKSVLERPD) show a composition bias toward basic and acidic residues.

Belongs to the gas vesicle GvpA family. In terms of assembly, gvpF to GvpM interact with each other in vitro, and may form multi-subunit complex(es). Interacts with GvpA.

Its subcellular location is the gas vesicle. A minor component of the gas vesicle. Proteins GvpF to GvpM might be involved in nucleating gas vesicle formation. Gas vesicles are hollow, gas filled proteinaceous nanostructures found in several microbial planktonic microorganisms. They allow positioning of halobacteria at the optimal depth for growth in the poorly aerated, shallow brine pools of their habitat. Functionally, expression of 2 c-vac DNA fragments containing 2 divergently transcribed regions (gvpE-gvpF-gvpG-gvpH-gvpI-gvpJ-gvpK-gvpL-gvpM and gvpA-gvpC-gvpN-gvpO) allows H.volcanii to produce gas vesicles. The polypeptide is Gas vesicle protein J2 (Halobacterium salinarum (strain ATCC 700922 / JCM 11081 / NRC-1) (Halobacterium halobium)).